We begin with the raw amino-acid sequence, 176 residues long: UBA-like domain-containing protein 1 (176 aa).

Low complexity-rich tracts occupy residues glutamate 88 to threonine 105 and threonine 120 to glutamine 137. Residues glutamate 88–arginine 176 form a disordered region. Residues proline 138–proline 150 are compositionally biased toward pro residues. A compositionally biased stretch (basic and acidic residues) spans proline 166–arginine 176.

The protein belongs to the UBALD family.

This is UBA-like domain-containing protein 1 (Ubald1) from Rattus norvegicus (Rat).